Reading from the N-terminus, the 120-residue chain is Ribonuclease P protein component (120 aa).

Belongs to the RnpA family. Consists of a catalytic RNA component (M1 or rnpB) and a protein subunit.

The catalysed reaction is Endonucleolytic cleavage of RNA, removing 5'-extranucleotides from tRNA precursor.. Functionally, RNaseP catalyzes the removal of the 5'-leader sequence from pre-tRNA to produce the mature 5'-terminus. It can also cleave other RNA substrates such as 4.5S RNA. The protein component plays an auxiliary but essential role in vivo by binding to the 5'-leader sequence and broadening the substrate specificity of the ribozyme. The protein is Ribonuclease P protein component of Rickettsia bellii (strain RML369-C).